The chain runs to 357 residues: Sorbitol dehydrogenase (357 aa).

Residue Ala2 is modified to N-acetylalanine. Cys45 is a Zn(2+) binding site. Tyr51 contributes to the substrate binding site. Residues His70 and Glu71 each contribute to the Zn(2+) site. Position 156 (Glu156) interacts with substrate. Residue Ser169 is modified to Phosphoserine. NAD(+) contacts are provided by residues Val184, Asp204, Arg209, Val273–Met275, and Val297–Arg299. The substrate site is built by Arg299 and Tyr300.

The protein belongs to the zinc-containing alcohol dehydrogenase family. In terms of assembly, homotetramer. Zn(2+) is required as a cofactor. Testis has the highest level of expression, followed by kidney, liver, and lung. Low levels of expression are also observed in lens, brain, and skeletal muscle. Expressed in sperm flagellum and very low expression in the sperm head.

The protein resides in the mitochondrion membrane. It localises to the cell projection. The protein localises to the cilium. Its subcellular location is the flagellum. It carries out the reaction keto-D-fructose + NADH + H(+) = D-sorbitol + NAD(+). The catalysed reaction is xylitol + NAD(+) = D-xylulose + NADH + H(+). It catalyses the reaction L-iditol + NAD(+) = keto-L-sorbose + NADH + H(+). Inhibited in vitro by p-hydroxymercuribenzoate, EDTA, l,l0-phenanthroline and N-ethylmaleimide. Its function is as follows. Polyol dehydrogenase that catalyzes the reversible NAD(+)-dependent oxidation of various sugar alcohols. Is active with D-sorbitol (D-glucitol) leading to the C2-oxidized product D-fructose. Is a key enzyme in the polyol pathway that interconverts glucose and fructose via sorbitol, which constitutes an important alternate route for glucose metabolism. May play a role in sperm motility by using sorbitol as an alternative energy source for sperm motility and protein tyrosine phosphorylation. Has no activity on ethanol. Cannot use NADP(+) as the electron acceptor. The chain is Sorbitol dehydrogenase (Sord) from Mus musculus (Mouse).